We begin with the raw amino-acid sequence, 539 residues long: Hydroxylamine reductase (539 aa).

4 residues coordinate [4Fe-4S] cluster: C3, C6, C13, and C19. Residues H240, E264, C308, C395, C423, C448, E482, and K484 each contribute to the hybrid [4Fe-2O-2S] cluster site. C395 is modified (cysteine persulfide).

This sequence belongs to the HCP family. The cofactor is [4Fe-4S] cluster. It depends on hybrid [4Fe-2O-2S] cluster as a cofactor.

Its subcellular location is the cytoplasm. The catalysed reaction is A + NH4(+) + H2O = hydroxylamine + AH2 + H(+). Its function is as follows. Catalyzes the reduction of hydroxylamine to form NH(3) and H(2)O. The protein is Hydroxylamine reductase of Thermodesulfovibrio yellowstonii (strain ATCC 51303 / DSM 11347 / YP87).